Here is an 887-residue protein sequence, read N- to C-terminus: Oxysterol-binding protein-related protein 3 (887 aa).

The interval 1–35 (MMSDEKNLGVSQKLVSPSRSTSSCSSKQGSRQDSW) is disordered. Residues S16 and S34 each carry the phosphoserine modification. Residues 16 to 32 (SPSRSTSSCSSKQGSRQ) show a composition bias toward low complexity. Residues 51–146 (PPVQKGFLLK…WVSKLRHHRM (96 aa)) enclose the PH domain. The short motif at 161–167 (HFFSGST) is the FFAT 1 element. Phosphoserine occurs at positions 200, 251, and 265. The segment at 261 to 326 (GSFESPKKEK…KNYSDGSETS (66 aa)) is disordered. The span at 268-280 (KEKRSHRRWRSRA) shows a compositional bias: basic residues. S304, S309, S320, S323, S371, S372, S410, S425, S437, and S440 each carry phosphoserine. The FFAT 2 motif lies at 450–454 (EFFDA).

Belongs to the OSBP family. In terms of assembly, homodimer. Interacts with RRAS. Interacts (phosphorylated form) with VAPA. Interacts with OSBPL6. Phosphorylation is enhanced in vitro by phorbol-12-myristate-13-acetate (PMA), forskolin and calcium ionophore A23187. Phosphorylation seems to be stimulated in conditions of low cell-cell (or cell-matrix) adhesion. As to expression, expressed in a subset of small lymphocytes (at protein level). Expressed at high concentration in kidney, lymph node and thymus. Expressed at moderate concentration in stomach, jejunum, ileum, appendix, spleen, leukocytes, trachea, lung and thyroid gland. Expressed at low concentration in whole brain, esophagus, duodenum, ileocecum, colon, skeletal muscle, bone marrow, placenta and mammary gland. Isoform 1a, isoform 1b, isoform 1c and isoform 1d are highly expressed in brain, bone marrow, colon, kidney, lung, skeletal muscle, spleen, thymus and thyroid. Not expressed in heart and liver. Isoform 2a, isoform 2b, isoform 2c and isoform 2d are expressed in brain, bone marrow, kidney, skeletal muscle, spleen, thymus and thyroid. Not expressed in heart, liver and lung.

Its subcellular location is the endoplasmic reticulum membrane. It is found in the cytoplasm. The protein resides in the cytosol. It localises to the cell membrane. The protein localises to the cell projection. Its subcellular location is the filopodium tip. It is found in the nucleus membrane. In terms of biological role, phosphoinositide-binding protein which associates with both cell and endoplasmic reticulum (ER) membranes. Can bind to the ER membrane protein VAPA and recruit VAPA to plasma membrane sites, thus linking these intracellular compartments. The ORP3-VAPA complex stimulates RRAS signaling which in turn attenuates integrin beta-1 (ITGB1) activation at the cell surface. With VAPA, may regulate ER morphology. Has a role in regulation of the actin cytoskeleton, cell polarity and cell adhesion. Binds to phosphoinositides with preference for PI(3,4)P2 and PI(3,4,5)P3. Also binds 25-hydroxycholesterol and cholesterol. In Homo sapiens (Human), this protein is Oxysterol-binding protein-related protein 3 (OSBPL3).